Here is a 210-residue protein sequence, read N- to C-terminus: uncharacterized protein (210 aa).

One can recognise a Fe2OG dioxygenase domain in the interval 90-193 (KPDQIIVNEY…RISITFRNVI (104 aa)).

This is an uncharacterized protein from Acanthamoeba polyphaga (Amoeba).